The following is a 560-amino-acid chain: MELILYVCKKVNIMENISQPQLPMGVSFLNVAHTYVPNTKVECHYTIPFGMKSSTRDWIGIFKVNTSSIRDYETFVWAVPPENAGERSISHCSVQFQAYYLPHPGEQQYHFRYVDQCGSVRGCSEAFVFGEPQPMEEMVTLEDEDSCLDMLLIVPKATFLQNQLEMAQKERNDLMRARLALEEEVISKEKRICYLEAALDISEKTCFSLKEQCEDLVTREQIAIGERNLLNCQEAELRERILQLESEIQSMNKKMQENDRVLEGTVAIKFSLETEKGELKQRLGETTVEIERYQLQVDSLREKLRSSQDMLSSSQQKALLMGEELASMSSIRDCTISDLHKSRLETADLAIKVSDLSVKFKEGMGQWWQEKTALNHSMEAKRDQIVNLKAEKLSLDNSLQEERSQRHALQCKLNQETDARQVQLSENRRELSELKSALKVTQMEKEQLIEERQEIHQYVRRLEERLDKLADEKWKEDKMLMEDKTDSSPPTLSVDLSDSDDESPGDEGVSQQLGPCSLDEQDLSLNLPVFPCEPQKVVINQPAPIACQLQPLPEDNPDSW.

2 coiled-coil regions span residues 156-192 (KATFLQNQLEMAQKERNDLMRARLALEEEVISKEKRI) and 367-480 (WWQE…DKML). A disordered region spans residues 480–517 (LMEDKTDSSPPTLSVDLSDSDDESPGDEGVSQQLGPCS). A compositionally biased stretch (low complexity) spans 487 to 496 (SSPPTLSVDL).

It belongs to the CALCOCO family.

It is found in the cytoplasm. The protein resides in the nucleus. Functionally, may function as a coactivator for aryl hydrocarbon and nuclear receptors. In Xenopus laevis (African clawed frog), this protein is Calcium-binding and coiled-coil domain-containing protein 1-A (calcoco1-a).